The sequence spans 270 residues: tRNA pseudouridine synthase A (270 aa).

D52 serves as the catalytic Nucleophile. Residue Y110 participates in substrate binding.

It belongs to the tRNA pseudouridine synthase TruA family. Homodimer.

The catalysed reaction is uridine(38/39/40) in tRNA = pseudouridine(38/39/40) in tRNA. Its function is as follows. Formation of pseudouridine at positions 38, 39 and 40 in the anticodon stem and loop of transfer RNAs. This Paraburkholderia xenovorans (strain LB400) protein is tRNA pseudouridine synthase A.